The following is a 190-amino-acid chain: Movement protein TGB3 (190 aa).

The Cytoplasmic portion of the chain corresponds to 1-52 (MDPPVILHSPNCSCQFCSSELPSTHTCGSQDRTVPLHVEATAAGHMEAKNFS). A helical membrane pass occupies residues 53 to 73 (LQYVLLVAFVSVLLGFSFCVY). The Lumenal portion of the chain corresponds to 74–166 (LKSMSNDEAS…TPCENNVLLK (93 aa)). Tyrosine 89 and tyrosine 120 each carry phosphotyrosine. Residues 89-93 (YQDLN) carry the Involved in plasmodesmata targeting and virus cell-to-cell movement motif. Residues 167–187 (LWKDDLSFTIIAVTVLVGAML) form a helical membrane-spanning segment. Over 188–190 (ARC) the chain is Cytoplasmic.

Belongs to the virgaviridae TGB3 movement protein family. Interacts with movement protein TGB2. TGB1-TGB3-TGB2 complex formation is enhanced by ATP hydrolysis.

The protein resides in the host cell junction. It is found in the host plasmodesma. Its subcellular location is the host endoplasmic reticulum membrane. The protein localises to the host cytoplasm. It localises to the host cytoskeleton. Functionally, participates in the transport of viral genome to neighboring plant cells directly through plasmodesmata, without any budding. TGBp2 and TGBp3 are necessary for intracellular delivery of TGBp1-containing vRNPs to plasmodesmata. Can gate plasmodesmata and increase their size exclusion limit. Induces host actin cytoskeleton network thickening, which probably plays a major role in virus cell-to-cell movement. The sequence is that of Movement protein TGB3 from Solanum nigrum (Black nightshade).